The following is a 267-amino-acid chain: Dihydropteroate synthase (267 aa).

In terms of domain architecture, Pterin-binding spans 1–251; it reads MTKTKIIGIL…NVDLNVKLAQ (251 aa). A Mg(2+)-binding site is contributed by N11. (7,8-dihydropterin-6-yl)methyl diphosphate contacts are provided by residues T51, D84, N103, D167, K203, and 239–241; that span reads RVH.

This sequence belongs to the DHPS family. Mg(2+) is required as a cofactor.

It carries out the reaction (7,8-dihydropterin-6-yl)methyl diphosphate + 4-aminobenzoate = 7,8-dihydropteroate + diphosphate. The protein operates within cofactor biosynthesis; tetrahydrofolate biosynthesis; 7,8-dihydrofolate from 2-amino-4-hydroxy-6-hydroxymethyl-7,8-dihydropteridine diphosphate and 4-aminobenzoate: step 1/2. In terms of biological role, catalyzes the condensation of para-aminobenzoate (pABA) with 6-hydroxymethyl-7,8-dihydropterin diphosphate (DHPt-PP) to form 7,8-dihydropteroate (H2Pte), the immediate precursor of folate derivatives. The protein is Dihydropteroate synthase (folP) of Staphylococcus haemolyticus.